Consider the following 460-residue polypeptide: Cyclic 2,3-diphosphoglycerate synthetase (460 aa).

As to quaternary structure, homodimer.

It localises to the cytoplasm. The enzyme catalyses (2R)-2,3-bisphosphoglycerate + ATP + H(+) = cyclic (2R)-2,3-bisphosphoglycerate + ADP + phosphate. Functionally, catalyzes the formation of cyclic 2,3-diphosphoglycerate (cDPG) by formation of an intramolecular phosphoanhydride bond at the expense of ATP. It is also able to catalyze the hydrolysis of cDPG but with significant slower rates (8-10 times). May be involved in thermoadaptation. This chain is Cyclic 2,3-diphosphoglycerate synthetase (cpgS), found in Methanothermus fervidus (strain ATCC 43054 / DSM 2088 / JCM 10308 / V24 S).